Reading from the N-terminus, the 307-residue chain is Regulating synaptic membrane exocytosis protein 3 (307 aa).

A disordered region spans residues 86–120; that stretch reads STETGIAVEMRSRVTRQGSRESTDGSTNSNSSEGT. Residues 109-119 show a composition bias toward polar residues; sequence DGSTNSNSSEG. The C2 domain occupies 155–273; sequence PMGDVHIAIM…DLSAAVTGWY (119 aa). Phosphoserine occurs at positions 294 and 297.

In terms of assembly, binds PPFIA3. Does not bind RAB3.

It is found in the synapse. Its function is as follows. Regulates synaptic membrane exocytosis. This chain is Regulating synaptic membrane exocytosis protein 3 (Rims3), found in Mus musculus (Mouse).